The sequence spans 288 residues: 4-diphosphocytidyl-2-C-methyl-D-erythritol kinase (288 aa).

K11 is a catalytic residue. 100–110 (PIAAGLGSGSS) contacts ATP. D140 is an active-site residue.

It belongs to the GHMP kinase family. IspE subfamily.

The enzyme catalyses 4-CDP-2-C-methyl-D-erythritol + ATP = 4-CDP-2-C-methyl-D-erythritol 2-phosphate + ADP + H(+). It participates in isoprenoid biosynthesis; isopentenyl diphosphate biosynthesis via DXP pathway; isopentenyl diphosphate from 1-deoxy-D-xylulose 5-phosphate: step 3/6. Its function is as follows. Catalyzes the phosphorylation of the position 2 hydroxy group of 4-diphosphocytidyl-2C-methyl-D-erythritol. The chain is 4-diphosphocytidyl-2-C-methyl-D-erythritol kinase from Wolbachia pipientis wMel.